Here is a 32-residue protein sequence, read N- to C-terminus: Tail virion protein G9P (32 aa).

A helical transmembrane segment spans residues 4-24 (LSYFFAAYCIGWVISHSILVF).

It belongs to the inovirus G9P protein family.

The protein resides in the virion. It localises to the host membrane. Its function is as follows. May initiate with G7P the virion concomitant assembly-budding process, by interacting with the packaging signal of the viral genome. The assembly-budding takes place at the host inner membrane. In turn, G7P and G9P are present at the end of the filamentous virion that emerges first from the bacterial host. The sequence is that of Tail virion protein G9P (IX) from Escherichia phage If1 (Bacteriophage If1).